We begin with the raw amino-acid sequence, 315 residues long: Malate dehydrogenase (315 aa).

Residues 7-12 (GAGNIG) and D32 each bind NAD(+). The substrate site is built by R81 and R87. NAD(+) contacts are provided by residues N94 and 117-119 (VTN). 2 residues coordinate substrate: N119 and R150. H174 serves as the catalytic Proton acceptor.

This sequence belongs to the LDH/MDH superfamily. MDH type 3 family.

It catalyses the reaction (S)-malate + NAD(+) = oxaloacetate + NADH + H(+). Catalyzes the reversible oxidation of malate to oxaloacetate. The polypeptide is Malate dehydrogenase (Neorickettsia sennetsu (strain ATCC VR-367 / Miyayama) (Ehrlichia sennetsu)).